The sequence spans 803 residues: MANVSKKVSWSGRDRDDEEGAPLLRRTGQPDEETPLLNGAGPGARQSHSALFRIGQMNNVELDDELLDPEVDPPHTFPKEIPHNEKLLSLKYESLDYDNSENQLFLEEERRINHTAFRTVEIKRWVICALIGILTGLVACFIDIVVENLAGLKYRVIKDNIDKFTEKGGLSFSLLLWATLNSAFVLVGSVIVAFIEPVAAGSGIPQIKCFLNGVKIPHVVRLKTLVIKVSGVILSVVGGLAVGKEGPMIHSGSVIAAGISQGRSTSLKRDFKIFEYFRRDTEKRDFVSAGAAAGVSAAFGAPVGGVLFSLEEGASFWNQFLTWRIFFASMISTFTLNFVLSIYHGNMWDLSSPGLINFGRFDSEKMAYTIHEIPVFIAMGVVGGILGAVFNALNYWLTMFRIRYIHRPCLQVIEAMLVAAVTATVAFVLIYSSRDCQPLQGSSMSYPLQLFCADGEYNSMAAAFFNTPEKSVVSLFHDPPGSYNPMTLGLFTLVYFFLACWTYGLTVSAGVFIPSLLIGAAWGRLFGISLSYLTGAAIWADPGKYALMGAAAQLGGIVRMTLSLTVIMMEATSNVTYGFPIMLVLMTAKIVGDVFIEGLYDMHIQLQSVPFLHWEAPVTSHSLTAREVMSTPVTCLRRREKVGIIVDVLSDTASNHNGFPVVEDVGDTQPARLQGLILRSQLIVLLKHKVFVERSNMGLVQRRLRLKDFRDAYPRFPPIQSIHVSQDERECTMDLSEFMNPSPYTVPQEASLPRVFKLFRALGLRHLVVVDNHNQVVGLVTRKDLARYRLGKGGLEELSLAQT.

The interval 1 to 46 (MANVSKKVSWSGRDRDDEEGAPLLRRTGQPDEETPLLNGAGPGARQ) is disordered. At 1-124 (MANVSKKVSW…TAFRTVEIKR (124 aa)) the chain is on the cytoplasmic side. Ser9 is subject to Phosphoserine. Transmembrane regions (helical) follow at residues 125 to 157 (WVICALIGILTGLVACFIDIVVENLAGLKYRVI) and 172 to 195 (FSLLLWATLNSAFVLVGSVIVAFI). The Selectivity filter part_1 motif lies at 201–205 (GSGIP). Position 202 (Ser202) interacts with chloride. The helical intramembrane region spans 204-211 (IPQIKCFL). Transmembrane regions (helical) follow at residues 221 to 239 (RLKTLVIKVSGVILSVVGG) and 245 to 262 (EGPMIHSGSVIAAGISQG). Positions 243 to 247 (GKEGP) match the Selectivity filter part_2 motif. 2 intramembrane regions (helical) span residues 286–298 (FVSAGAAAGVSAA) and 302–310 (PVGGVLFSL). 5 consecutive transmembrane segments (helical) span residues 320–339 (FLTWRIFFASMISTFTLNFV), 373–403 (IPVFIAMGVVGGILGAVFNALNYWLTMFRIR), 408–430 (PCLQVIEAMLVAAVTATVAFVLI), 485–505 (PMTLGLFTLVYFFLACWTYGL), and 510–533 (GVFIPSLLIGAAWGRLFGISLSYL). The short motif at 510–514 (GVFIP) is the Selectivity filter part_3 element. Residue Phe512 participates in chloride binding. An intramembrane region (helical) is located at residues 543 to 557 (GKYALMGAAAQLGGI). Positions 558–560 (VRM) form an intramembrane region, note=Loop between two helices. Residues 561–572 (TLSLTVIMMEAT) constitute an intramembrane region (helical). The segment at residues 573 to 576 (SNVT) is an intramembrane region (note=Loop between two helices). Residues 577–595 (YGFPIMLVLMTAKIVGDVF) traverse the membrane as a helical segment. Residues 596-803 (IEGLYDMHIQ…GLEELSLAQT (208 aa)) lie on the Cytoplasmic side of the membrane. Tyr600 lines the chloride pocket. CBS domains lie at 629–693 (MSTP…VFVE) and 739–797 (MNPS…GLEE). ATP contacts are provided by residues 656 to 658 (HNG) and 781 to 784 (TRKD). Ser799 is modified (phosphoserine).

Belongs to the chloride channel (TC 2.A.49) family. ClC-7/CLCN7 subfamily. Chloride channel 7 are heteromers of alpha (CLCN7) and beta (OSTM1) subunits. Liver, spleen, kidneys and brain.

It is found in the lysosome membrane. It catalyses the reaction 2 chloride(in) + H(+)(out) = 2 chloride(out) + H(+)(in). Its function is as follows. Slowly voltage-gated channel mediating the exchange of chloride ions against protons. Functions as antiporter and contributes to the acidification of the lysosome lumen and may be involved in maintaining lysosomal pH. The CLC channel family contains both chloride channels and proton-coupled anion transporters that exchange chloride or another anion for protons. The presence of conserved gating glutamate residues is typical for family members that function as antiporters. In Mus musculus (Mouse), this protein is H(+)/Cl(-) exchange transporter 7.